We begin with the raw amino-acid sequence, 448 residues long: Death-associated protein kinase 3 (448 aa).

The Protein kinase domain occupies 13–275 (YEMGEELGSG…IAQSLEHSWI (263 aa)). ATP-binding positions include 19–27 (LGSGQFAIV) and Lys42. The active-site Proton acceptor is Asp139. The interval 161-204 (DFGIAHRIEAGSEFKNIFGTPEFVAPEIVNYEPLGLEADMWSIG) is activation segment. Residues Thr180 and Thr225 each carry the phosphothreonine modification. Thr265 is subject to Phosphothreonine; by autocatalysis. Thr265 bears the Phosphothreonine; by ROCK1 mark. The residue at position 304 (Ser304) is a Phosphoserine; by DAPK1. Ser306 carries the phosphoserine; by autocatalysis and DAPK1 modification. Phosphoserine; by DAPK1 is present on residues Ser307, Ser313, and Ser321. The interval 390–448 (AQEEARAALLGAGGLKRRLCRLENRYDALAAQVAAEVQFVRDLVRALEQERLQAECGVR) is interaction with CDC5L. Positions 422 to 436 (VAAEVQFVRDLVRAL) are leucine-zipper.

It belongs to the protein kinase superfamily. CAMK Ser/Thr protein kinase family. DAP kinase subfamily. In terms of assembly, homooligomer in its kinase-active form (homotrimers and homodimers are reported); monomeric in its kinase-inactive form. Homodimerization is required for activation segment autophosphorylation. Interacts with DAXX, PAWR, ATF4, NLK, TCF7L2, UBE2D1, UBE2D2, UBE2D3, and CDC5L. Interacts with AR; enhanced by AATF. Interacts with LUZP1; the interaction is likely to occur throughout the cell cycle and reduces the LUZP1-mediated suppression of MYL9 phosphorylation. It depends on Mg(2+) as a cofactor. In terms of processing, ubiquitinated. Ubiquitination mediated by the UBE2D3 E3 ligase does not lead to proteasomal degradation, but influences promyelocytic leukemia protein nuclear bodies (PML-NBs) formation in the nucleus. Post-translationally, the phosphorylation status is critical for kinase activity, oligomerization and intracellular localization. Phosphorylation at Thr-180, Thr-225 and Thr-265 is essential for activity. The phosphorylated form is localized in the cytoplasm and nuclear translocation or retention is maximal when it is not phosphorylated. Phosphorylation increases the trimeric form, and its dephosphorylation favors a kinase-inactive monomeric form. As to expression, highly expressed in heart, brain, lung, skeletal muscle, kidney and testis. Lower levels in liver and spleen.

The protein resides in the nucleus. The protein localises to the PML body. It is found in the cytoplasm. It localises to the cytoskeleton. Its subcellular location is the microtubule organizing center. The protein resides in the centrosome. The protein localises to the chromosome. It is found in the centromere. It localises to the spindle. Its subcellular location is the midbody. It catalyses the reaction L-seryl-[protein] + ATP = O-phospho-L-seryl-[protein] + ADP + H(+). The catalysed reaction is L-threonyl-[protein] + ATP = O-phospho-L-threonyl-[protein] + ADP + H(+). A sequential activation is proposed: autophosphorylation at consensus sites is leading to dimerization of the catalytic domain and activation segment exchange (producing an active confirmation of both kinase modules in trans) followed by phosphorylation at Thr-180 in the activation segment and at other regulatory sites. Phosphorylation at Thr-180, Thr-225 and Thr-265 is essential for activity. Inhibited by pyridone 6 (K00225), a potent, ATP-competitive inhibitor. Phosphorylation at Thr-180, Thr-225 and Thr-265 is essential for activity. Its function is as follows. Serine/threonine kinase which is involved in the regulation of apoptosis, autophagy, transcription, translation and actin cytoskeleton reorganization. Regulates both type I (caspase-dependent) apoptotic and type II (caspase-independent) autophagic cell deaths signal, depending on the cellular setting. Involved in formation of promyelocytic leukemia protein nuclear body (PML-NB). Involved in apoptosis involving PAWR which mediates cytoplasmic relocation; in vitro phosphorylates PAWR. Regulates myosin phosphorylation in both smooth muscle and non-muscle cells. In smooth muscle, regulates myosin either directly by phosphorylating MYL12B and MYL9 or through inhibition of smooth muscle myosin phosphatase (SMPP1M) via phosphorylation of PPP1R12A; the inhibition of SMPP1M functions to enhance muscle responsiveness to Ca(2+) and promote a contractile state. Phosphorylates MYL12B in non-muscle cells leading to reorganization of actin cytoskeleton such as in regulation of cell polarity and cell migration. Positively regulates canonical Wnt/beta-catenin signaling through interaction with NLK and TCF7L2; disrupts the NLK-TCF7L2 complex thereby influencing the phosphorylation of TCF7L2 by NLK. Phosphorylates STAT3 and enhances its transcriptional activity. Enhances transcription from AR-responsive promoters in a hormone- and kinase-dependent manner. Phosphorylates histone H3 on 'Thr-11' at centromeres during mitosis. Phosphorylates RPL13A on 'Ser-77' upon interferon-gamma activation which is causing RPL13A release from the ribosome, RPL13A association with the GAIT complex and its subsequent involvement in transcript-selective translation inhibition. This Mus musculus (Mouse) protein is Death-associated protein kinase 3 (Dapk3).